Consider the following 142-residue polypeptide: Large ribosomal subunit protein uL11 (142 aa).

It belongs to the universal ribosomal protein uL11 family. Part of the ribosomal stalk of the 50S ribosomal subunit. Interacts with L10 and the large rRNA to form the base of the stalk. L10 forms an elongated spine to which L12 dimers bind in a sequential fashion forming a multimeric L10(L12)X complex. Post-translationally, one or more lysine residues are methylated.

Functionally, forms part of the ribosomal stalk which helps the ribosome interact with GTP-bound translation factors. This Idiomarina loihiensis (strain ATCC BAA-735 / DSM 15497 / L2-TR) protein is Large ribosomal subunit protein uL11.